A 428-amino-acid chain; its full sequence is MTLDNNQELTYRNSQSLGQPGFSLAVNSSNPFNHSGLNFGQNNDSKKISVENNRIGEIVPGRVANIKVIGVGGGGGNAVNRMIESDVSGVEFWSINTDAQALTLAGAPSRLQIGQKLTRGLGAGGNPAIGQKAAEESRDEIATALEGADLVFITAGMGGGTGTGAAPIVAEVAKEMGALTVGVVTRPFVFEGRRRTSQAEQGIEGLKSRVDTLIIIPNNKLLEVIPEQTPVQEAFRYADDVLRQGVQGISDIITIPGLVNVDFADVRAVMADAGSALMGIGVSSGKSRAREAAIAAISSPLLECSIEGARGVVFNITGGSDLTLHEVNAAAETIYEVVDPNANIIFGAVIDDRLQGEVRITVIATGFTGEIQAAPQQNAANARVVSAPPKRTPTQTPLTNSPAPTPEPKEKSGLDIPDFLQRRRPPKN.

GTP-binding positions include 73–77 (GGGGN), 160–162 (GTG), glutamate 191, arginine 195, and aspartate 239. The tract at residues 378 to 428 (NAANARVVSAPPKRTPTQTPLTNSPAPTPEPKEKSGLDIPDFLQRRRPPKN) is disordered. Positions 392 to 402 (TPTQTPLTNSP) are enriched in polar residues.

Belongs to the FtsZ family. Homodimer. Polymerizes to form a dynamic ring structure in a strictly GTP-dependent manner. Interacts directly with several other division proteins.

It is found in the cytoplasm. Essential cell division protein that forms a contractile ring structure (Z ring) at the future cell division site. The regulation of the ring assembly controls the timing and the location of cell division. One of the functions of the FtsZ ring is to recruit other cell division proteins to the septum to produce a new cell wall between the dividing cells. Binds GTP and shows GTPase activity. This Nostoc sp. (strain PCC 7120 / SAG 25.82 / UTEX 2576) protein is Cell division protein FtsZ.